The chain runs to 153 residues: Insulin-like growth factor 1 (153 aa).

The interval 49–77 is b; the sequence is GPETLCGAELVDALQFVCGDRGFYFSKPT. 3 disulfide bridges follow: Cys-54-Cys-96, Cys-66-Cys-109, and Cys-95-Cys-100. The segment at 78-89 is c; sequence GYGSSSRRLHHK. Residues 90–110 form an a region; it reads GIVDECCFQSCDLRRLEMYCA. The segment at 111-118 is d; it reads PIKPPKSA. Residues 119–153 constitute a propeptide, e peptide; the sequence is RSVRAQRHTDMPKAQKEVHLKNTSRGNTGNRNYRM. The segment at 119-153 is disordered; that stretch reads RSVRAQRHTDMPKAQKEVHLKNTSRGNTGNRNYRM. Over residues 125 to 138 the composition is skewed to basic and acidic residues; that stretch reads RHTDMPKAQKEVHL. Residues 139 to 153 show a composition bias toward polar residues; the sequence is KNTSRGNTGNRNYRM.

The protein belongs to the insulin family. Forms a ternary complex with IGFR1 and ITGAV:ITGB3. Forms a ternary complex with IGFR1 and ITGA6:ITGB4. Forms a ternary complex with IGFBP3 and ALS.

The protein resides in the secreted. The insulin-like growth factors, isolated from plasma, are structurally and functionally related to insulin but have a much higher growth-promoting activity. Acts as a ligand for IGF1R. Binds to the alpha subunit of IGF1R, leading to the activation of the intrinsic tyrosine kinase activity which autophosphorylates tyrosine residues in the beta subunit thus initiatiating a cascade of down-stream signaling events leading to activation of the PI3K-AKT/PKB and the Ras-MAPK pathways. Binds to integrins. Its binding to integrins and subsequent ternary complex formation with integrins and IGFR1 are essential for IGF1 signaling. This chain is Insulin-like growth factor 1, found in Gallus gallus (Chicken).